The chain runs to 106 residues: Halilectin 3, beta chain (106 aa).

Residue Asn65 is glycosylated (N-linked (GlcNAc...) asparagine).

As to quaternary structure, probable heterotrimer consisting of an alpha chain and two beta chains. The alpha chain can probably have different glycosylation states. Glycosylated.

Lectin with affinity for N-acetyl-galactosamine, carragenan and glycoprotein porcine stomach mucin (PSM). Has metal-independent hemagglutinating activity towards erythrocytes from rabbit and human. Hemagglutinating activity is not inhibited by D-galactose, D-glucose, D-mannose, D-fucose, methyl-alpha-D-galactopyranoside, methyl-alpha-D-glucopyranoside, N-acetyl-glucosamine, N-acetyl-mannosamine, D-fructose, alpha-D-lactose, beta-D-lactose, D-lactulose, D-sucrose, fucoidan or glycoproteins thyroglobulin and ovalmucoid. The protein is Halilectin 3, beta chain of Haliclona caerulea (Blue Caribbean sponge).